The sequence spans 62 residues: Photosystem II reaction center protein Z (62 aa).

A run of 2 helical transmembrane segments spans residues 8-28 (AVFA…VVFA) and 41-61 (FSGT…NSLI).

The protein belongs to the PsbZ family. In terms of assembly, PSII is composed of 1 copy each of membrane proteins PsbA, PsbB, PsbC, PsbD, PsbE, PsbF, PsbH, PsbI, PsbJ, PsbK, PsbL, PsbM, PsbT, PsbY, PsbZ, Psb30/Ycf12, at least 3 peripheral proteins of the oxygen-evolving complex and a large number of cofactors. It forms dimeric complexes.

It is found in the plastid. The protein resides in the chloroplast thylakoid membrane. May control the interaction of photosystem II (PSII) cores with the light-harvesting antenna, regulates electron flow through the 2 photosystem reaction centers. PSII is a light-driven water plastoquinone oxidoreductase, using light energy to abstract electrons from H(2)O, generating a proton gradient subsequently used for ATP formation. This is Photosystem II reaction center protein Z from Lotus japonicus (Lotus corniculatus var. japonicus).